Consider the following 161-residue polypeptide: Type II secretion system protein M (161 aa).

Residues 1–16 lie on the Cytoplasmic side of the membrane; sequence MHNLLALWQQRTRRER. Residues 17-36 form a helical membrane-spanning segment; sequence CLLLGMAVVLLIGLVYYTLW. The Periplasmic portion of the chain corresponds to 37–161; that stretch reads QPWQNREAQW…TLVLERSDEK (125 aa).

The protein belongs to the GSP M family. Type II secretion system is composed of four main components: the outer membrane complex, the inner membrane complex, the cytoplasmic secretion ATPase and the periplasm-spanning pseudopilus. Forms homodimers. Interacts with PulL/GspL. Interacts with PulE/GspE and PulF/GspF.

It is found in the cell inner membrane. Functionally, inner membrane component of the type II secretion system required for the energy-dependent secretion of extracellular factors such as proteases and toxins from the periplasm. Plays a role in the complex assembly and recruits PulL resulting in a stable complex in the inner membrane. Provides thus a link between the energy-providing PulE protein in the cytoplasm and the rest of the T2SS machinery. This Klebsiella pneumoniae protein is Type II secretion system protein M (pulM).